Reading from the N-terminus, the 196-residue chain is Imidazoleglycerol-phosphate dehydratase (196 aa).

It belongs to the imidazoleglycerol-phosphate dehydratase family.

It localises to the cytoplasm. It catalyses the reaction D-erythro-1-(imidazol-4-yl)glycerol 3-phosphate = 3-(imidazol-4-yl)-2-oxopropyl phosphate + H2O. It participates in amino-acid biosynthesis; L-histidine biosynthesis; L-histidine from 5-phospho-alpha-D-ribose 1-diphosphate: step 6/9. The chain is Imidazoleglycerol-phosphate dehydratase from Desulforamulus reducens (strain ATCC BAA-1160 / DSM 100696 / MI-1) (Desulfotomaculum reducens).